The primary structure comprises 486 residues: Cardiolipin synthase A (486 aa).

2 helical membrane passes run 3-23 and 38-58; these read TFYT…IAGV and MAWL…YLSF. PLD phosphodiesterase domains lie at 219 to 246 and 399 to 426; these read MDLR…VDPR and KDGL…DMRS. Active-site residues include His-224, Lys-226, Asp-231, His-404, Lys-406, and Asp-411.

It belongs to the phospholipase D family. Cardiolipin synthase subfamily. ClsA sub-subfamily.

The protein resides in the cell inner membrane. It carries out the reaction 2 a 1,2-diacyl-sn-glycero-3-phospho-(1'-sn-glycerol) = a cardiolipin + glycerol. In terms of biological role, catalyzes the reversible phosphatidyl group transfer from one phosphatidylglycerol molecule to another to form cardiolipin (CL) (diphosphatidylglycerol) and glycerol. The polypeptide is Cardiolipin synthase A (Pectobacterium carotovorum subsp. carotovorum (strain PC1)).